The following is a 334-amino-acid chain: Dihydroorotate dehydrogenase (quinone) (334 aa).

Residues 59–63 (AGLDK) and Thr83 each bind FMN. A substrate-binding site is contributed by Lys63. Residue 108–112 (NRMGF) coordinates substrate. FMN is bound by residues Asn136 and Asn169. Residue Asn169 coordinates substrate. Ser172 functions as the Nucleophile in the catalytic mechanism. Residue Asn174 participates in substrate binding. Positions 214 and 242 each coordinate FMN. Position 243-244 (243-244 (NT)) interacts with substrate. FMN is bound by residues Gly265, Gly294, and 315–316 (YS).

It belongs to the dihydroorotate dehydrogenase family. Type 2 subfamily. In terms of assembly, monomer. FMN is required as a cofactor.

The protein localises to the cell membrane. It catalyses the reaction (S)-dihydroorotate + a quinone = orotate + a quinol. It functions in the pathway pyrimidine metabolism; UMP biosynthesis via de novo pathway; orotate from (S)-dihydroorotate (quinone route): step 1/1. Its function is as follows. Catalyzes the conversion of dihydroorotate to orotate with quinone as electron acceptor. This Acinetobacter baumannii (strain AB0057) protein is Dihydroorotate dehydrogenase (quinone).